The following is a 256-amino-acid chain: Protein FixA (256 aa).

The protein belongs to the ETF beta-subunit/FixA family. As to quaternary structure, heterodimer of FixA and FixB.

It participates in amine and polyamine metabolism; carnitine metabolism. Functionally, required for anaerobic carnitine reduction. May bring reductant to CaiA. The protein is Protein FixA of Escherichia coli O81 (strain ED1a).